The chain runs to 447 residues: Exodeoxyribonuclease 7 large subunit (447 aa).

It belongs to the XseA family. As to quaternary structure, heterooligomer composed of large and small subunits.

It localises to the cytoplasm. It catalyses the reaction Exonucleolytic cleavage in either 5'- to 3'- or 3'- to 5'-direction to yield nucleoside 5'-phosphates.. Its function is as follows. Bidirectionally degrades single-stranded DNA into large acid-insoluble oligonucleotides, which are then degraded further into small acid-soluble oligonucleotides. This Pediococcus pentosaceus (strain ATCC 25745 / CCUG 21536 / LMG 10740 / 183-1w) protein is Exodeoxyribonuclease 7 large subunit.